A 68-amino-acid chain; its full sequence is Antimicrobial peptide Eval655 (68 aa).

The first 23 residues, 1–23 (MKTQFVVLLVALVLLQMFAQSEA), serve as a signal peptide directing secretion. Position 36 is a leucine amide (Leu36). A propeptide spanning residues 37–68 (GKRGLKNLDDFDDIFDDDLSSADLEFLKQLMR) is cleaved from the precursor.

The protein belongs to the non-disulfide-bridged peptide (NDBP) superfamily. Short antimicrobial peptide (group 4) family. In terms of tissue distribution, expressed by the venom gland.

Its subcellular location is the secreted. In terms of biological role, probable antimicrobial peptide. Shows low inhibitory activity against herpes simplex virus type 1 (HSV-1). The polypeptide is Antimicrobial peptide Eval655 (Euscorpiops validus (Scorpion)).